Here is a 185-residue protein sequence, read N- to C-terminus: Elongation factor P (185 aa).

The protein belongs to the elongation factor P family.

Its subcellular location is the cytoplasm. The protein operates within protein biosynthesis; polypeptide chain elongation. In terms of biological role, involved in peptide bond synthesis. Stimulates efficient translation and peptide-bond synthesis on native or reconstituted 70S ribosomes in vitro. Probably functions indirectly by altering the affinity of the ribosome for aminoacyl-tRNA, thus increasing their reactivity as acceptors for peptidyl transferase. The protein is Elongation factor P of Lysinibacillus sphaericus (strain C3-41).